Reading from the N-terminus, the 326-residue chain is o-succinylbenzoate synthase (326 aa).

The Proton donor role is filled by lysine 110. Mg(2+) is bound by residues aspartate 138, glutamate 165, and aspartate 188. The active-site Proton acceptor is the lysine 212.

It belongs to the mandelate racemase/muconate lactonizing enzyme family. MenC type 1 subfamily. A divalent metal cation is required as a cofactor.

The catalysed reaction is (1R,6R)-6-hydroxy-2-succinyl-cyclohexa-2,4-diene-1-carboxylate = 2-succinylbenzoate + H2O. It participates in quinol/quinone metabolism; 1,4-dihydroxy-2-naphthoate biosynthesis; 1,4-dihydroxy-2-naphthoate from chorismate: step 4/7. It functions in the pathway quinol/quinone metabolism; menaquinone biosynthesis. Functionally, converts 2-succinyl-6-hydroxy-2,4-cyclohexadiene-1-carboxylate (SHCHC) to 2-succinylbenzoate (OSB). The protein is o-succinylbenzoate synthase of Mycobacterium bovis (strain ATCC BAA-935 / AF2122/97).